A 305-amino-acid chain; its full sequence is Aurasperone B biosynthesis cluster protein A (305 aa).

The signal sequence occupies residues 1 to 26; sequence MSIFFSIRFWPAAISAAILWLPQVLG. Residues N29, N34, N64, N83, N132, N183, N218, and N288 are each glycosylated (N-linked (GlcNAc...) asparagine).

It belongs to the bfoA family.

Its function is as follows. Part of the gene cluster that mediates the biosynthesis of aurasperone B, a dimeric gamma-naphthopyrone. The first step in the biosynthesis of aurasperone B is the production of gamma-naphthopyrone precursor YWA1 by the non-reducing polyketide synthase albA, via condensation of one acetyl-CoA starter unit with 6 malonyl-CoA units. YWA1 is then methylated by aunE at position C-6 to yield foncesin which is further methylated at position C-8 by aunD to produce fonsecin B. A key enzyme in the biosynthetic pathway is the cytochrome P450 monooxygenase aunB which catalyzes the oxidative dimerization of fonsecin B to aurasperone B. AunB also catalyzes the oxidative dimerization of rubrofusarin B into aurasperone A. This Aspergillus niger (strain ATCC 1015 / CBS 113.46 / FGSC A1144 / LSHB Ac4 / NCTC 3858a / NRRL 328 / USDA 3528.7) protein is Aurasperone B biosynthesis cluster protein A.